The sequence spans 202 residues: QQFSPRYIELVVVADHGMFKKYNSNLNTIRKWVHEMLNTVNGFFRSMNVDASLVNLEVWSKKDLIKVEKDSSKTLTSFGEWRERDLLPRISHDHAQLLTVIFLDEETIGIAYTAGMCDLSQSVAVVMDHSKKNLRVAVTMAHELGHNLGMRHDGNQCHCNAPSCIMADTLSKGLSFEFSDCSQNQYQTYLTKHNPQCILNKP.

The residue at position 1 (Gln-1) is a Pyrrolidone carboxylic acid. Residues 6–202 form the Peptidase M12B domain; sequence RYIELVVVAD…HNPQCILNKP (197 aa). Residues Glu-9 and Asp-93 each coordinate Ca(2+). Intrachain disulfides connect Cys-117–Cys-197, Cys-157–Cys-181, and Cys-159–Cys-164. Residue His-142 coordinates Zn(2+). Glu-143 is an active-site residue. Zn(2+) is bound by residues His-146 and His-152. Cys-197 and Asn-200 together coordinate Ca(2+).

Belongs to the venom metalloproteinase (M12B) family. P-I subfamily. As to quaternary structure, monomer. Requires Zn(2+) as cofactor. Expressed by the venom gland.

The protein resides in the secreted. Its activity is regulated as follows. Inhibited by EDTA and 2-mercaptoethanol. Inhibited by 1 mM zinc ion and to a lesser extent by 1 mM calcium ion. Its function is as follows. Non-hemorrhagic metalloproteinase that hydrolyzes the alpha chains of fibrinogen, as well as fibrin, fibronectin and casein. Beta and gamma chains are also hydrolyzed, but more slowly. Thrombolytic activity is also observed. Induces detachment of endothelial cells followed by death, and inhibits endothelial cell adhesion to fibronectin. Induces edema in mouse paw. Inhibits ADP-induced platelet aggregation on human platelet-rich plasma with an IC(50) of 2.8 uM. The chain is Snake venom metalloproteinase leucurolysin-A from Bothrops leucurus (Whitetail lancehead).